We begin with the raw amino-acid sequence, 791 residues long: Ataxin-2 homolog (791 aa).

Polar residues predominate over residues 1 to 22 (MATRSVSMKQTSQRAASPNKTQ). Disordered regions lie at residues 1–28 (MATR…KKWS), 60–100 (RGGV…QQRV), 112–134 (RTET…GVPL), 235–311 (TRSN…KEGQ), 326–423 (SLDS…TKLG), 452–505 (KPAP…PVSS), 613–634 (NPSQ…GNSS), and 707–791 (PMYG…EAKP). Over residues 76 to 96 (SLASSEENVSSVSGSAKSNNS) the composition is skewed to low complexity. Basic and acidic residues-rich tracts occupy residues 112 to 125 (RTET…RWMP) and 243 to 256 (NNKD…EAPH). The span at 326 to 337 (SLDSKQPSSTKS) shows a compositional bias: polar residues. Composition is skewed to basic and acidic residues over residues 360-371 (DSKEPRKEEAEK) and 395-418 (SKEE…KETT). A compositionally biased stretch (low complexity) spans 473–486 (SIPSTTPQSPSVVS). A compositionally biased stretch (polar residues) spans 487 to 497 (NGENKPSSSPV). 2 stretches are compositionally biased toward low complexity: residues 715–725 (SNSQRSFNSSN) and 734–760 (NNNA…NTTA). Over residues 774 to 791 (DATEKTEKDASANQEAKP) the composition is skewed to basic and acidic residues.

It belongs to the ataxin-2 family. As to quaternary structure, interacts with mkt1.

Its subcellular location is the cytoplasm. In terms of biological role, involved in post-transcriptional regulation of gene expression, probably by association with mkt1. The protein is Ataxin-2 homolog of Schizosaccharomyces pombe (strain 972 / ATCC 24843) (Fission yeast).